The primary structure comprises 395 residues: F-box/LRR-repeat protein 12 (395 aa).

Residues 13-61 (TSIIHLPDDCLSFIFQRLDSVADHDSFGLTCHRWLNIQNISRRSLQFQC) enclose the F-box domain. LRR repeat units follow at residues 75-100 (NPDVSSHHLHRLLTRFQWLEHLSLSG), 101-126 (CTVLNDSSLDSLRYPGARLHTLYLDC), 127-152 (CFGISDDGISTIASFCPNLSVVSLYR), 154-177 (NISDIGLETLARASLSLKCVNLSY), 178-203 (CPLVSDFGIKALSQACLQLESVKISN), 226-250 (SCQLEPKGITGIISGGGIEFLNISG), 252-278 (SCYIRKDGLVPIGSGIASKLRILNLRM), 279-304 (CRTVGDESIEAIAKGCPLLQEWNLAL), 305-330 (CHEVKISGWEAVGKWCRNLKKLHVNR), and 331-356 (CRNLCDQGLLALRCGCMNLQILYMNG).

The polypeptide is F-box/LRR-repeat protein 12 (FBL12) (Arabidopsis thaliana (Mouse-ear cress)).